The primary structure comprises 369 residues: Erythronate-4-phosphate dehydrogenase (369 aa).

The substrate site is built by S45 and T66. D146 contributes to the NAD(+) binding site. The active site involves R209. D233 is an NAD(+) binding site. E238 is a catalytic residue. Catalysis depends on H255, which acts as the Proton donor. G258 is an NAD(+) binding site.

Belongs to the D-isomer specific 2-hydroxyacid dehydrogenase family. PdxB subfamily. In terms of assembly, homodimer.

The protein localises to the cytoplasm. The catalysed reaction is 4-phospho-D-erythronate + NAD(+) = (R)-3-hydroxy-2-oxo-4-phosphooxybutanoate + NADH + H(+). Its pathway is cofactor biosynthesis; pyridoxine 5'-phosphate biosynthesis; pyridoxine 5'-phosphate from D-erythrose 4-phosphate: step 2/5. Functionally, catalyzes the oxidation of erythronate-4-phosphate to 3-hydroxy-2-oxo-4-phosphonooxybutanoate. The polypeptide is Erythronate-4-phosphate dehydrogenase (Porphyromonas gingivalis (strain ATCC BAA-308 / W83)).